Consider the following 245-residue polypeptide: Probable phosphatase Teth514_1060 (245 aa).

Positions 8, 10, 16, 41, 74, 102, 133, 194, and 196 each coordinate Zn(2+).

This sequence belongs to the PHP family. Zn(2+) serves as cofactor.

This Thermoanaerobacter sp. (strain X514) protein is Probable phosphatase Teth514_1060.